The chain runs to 321 residues: Beta-ketoacyl-[acyl-carrier-protein] synthase III (321 aa).

Active-site residues include C113 and H246. The interval 247–251 is ACP-binding; that stretch reads QANVR. N276 is an active-site residue.

Belongs to the thiolase-like superfamily. FabH family. Homodimer.

The protein localises to the cytoplasm. The catalysed reaction is malonyl-[ACP] + acetyl-CoA + H(+) = 3-oxobutanoyl-[ACP] + CO2 + CoA. The protein operates within lipid metabolism; fatty acid biosynthesis. In terms of biological role, catalyzes the condensation reaction of fatty acid synthesis by the addition to an acyl acceptor of two carbons from malonyl-ACP. Catalyzes the first condensation reaction which initiates fatty acid synthesis and may therefore play a role in governing the total rate of fatty acid production. Possesses both acetoacetyl-ACP synthase and acetyl transacylase activities. Its substrate specificity determines the biosynthesis of branched-chain and/or straight-chain of fatty acids. The sequence is that of Beta-ketoacyl-[acyl-carrier-protein] synthase III from Enterococcus faecalis (strain ATCC 700802 / V583).